Here is a 557-residue protein sequence, read N- to C-terminus: Formate--tetrahydrofolate ligase (557 aa).

Position 67–74 (67–74 (TPAGEGKT)) interacts with ATP.

This sequence belongs to the formate--tetrahydrofolate ligase family.

The enzyme catalyses (6S)-5,6,7,8-tetrahydrofolate + formate + ATP = (6R)-10-formyltetrahydrofolate + ADP + phosphate. It functions in the pathway one-carbon metabolism; tetrahydrofolate interconversion. In Cereibacter sphaeroides (strain KD131 / KCTC 12085) (Rhodobacter sphaeroides), this protein is Formate--tetrahydrofolate ligase.